Reading from the N-terminus, the 751-residue chain is Dendritic arbor reduction protein 1 (751 aa).

The segment covering asparagine 57 to serine 89 has biased composition (low complexity). Disordered regions lie at residues asparagine 57–asparagine 167, leucine 248–glutamine 275, threonine 304–leucine 351, leucine 374–glutamine 410, serine 458–glycine 578, and serine 594–isoleucine 639. Over residues histidine 95 to histidine 125 the composition is skewed to basic residues. The span at alanine 153–asparagine 167 shows a compositional bias: polar residues. Low complexity-rich tracts occupy residues serine 251–asparagine 267, arginine 309–leucine 351, and leucine 374–serine 393. The span at glycine 400–glutamine 410 shows a compositional bias: polar residues. Low complexity-rich tracts occupy residues serine 458–serine 513, aspartate 527–threonine 548, and serine 594–glutamine 610. 3 C2H2-type zinc fingers span residues histidine 664 to histidine 688, tyrosine 694 to histidine 718, and phenylalanine 724 to histidine 746.

It belongs to the krueppel C2H2-type zinc-finger protein family. As to expression, highly enriched in the peripheral nervous system but is absent from the central nervous system. Expressed in neurons with more than one dendrite including da neurons, bd neurons and the dmd1 neuron but undetectable in neurons with single dendrites such as external sensory organ neurons and chodonotal neurons.

The protein resides in the nucleus. Its function is as follows. Transcriptional regulator which promotes dendrite growth by suppressing, either directly or indirectly, the expression of the microtubule-severing protein spas. Determines multipolar neuron morphology in postmitotic neurons by positively regulating the expression of genes involved in nuclear positioning including several dynein genes and the nuclear migration protein nudC. This is Dendritic arbor reduction protein 1 from Drosophila melanogaster (Fruit fly).